Consider the following 193-residue polypeptide: dITP/XTP pyrophosphatase (193 aa).

A substrate-binding site is contributed by 7 to 12 (SENENK). D65 serves as the catalytic Proton acceptor. Residue D65 participates in Mg(2+) binding. Substrate-binding positions include S66, 144–147 (FGYD), K167, and 172–173 (HR).

Belongs to the HAM1 NTPase family. In terms of assembly, homodimer. Mg(2+) is required as a cofactor.

It catalyses the reaction XTP + H2O = XMP + diphosphate + H(+). The enzyme catalyses dITP + H2O = dIMP + diphosphate + H(+). It carries out the reaction ITP + H2O = IMP + diphosphate + H(+). Its function is as follows. Pyrophosphatase that catalyzes the hydrolysis of nucleoside triphosphates to their monophosphate derivatives, with a high preference for the non-canonical purine nucleotides XTP (xanthosine triphosphate), dITP (deoxyinosine triphosphate) and ITP. Seems to function as a house-cleaning enzyme that removes non-canonical purine nucleotides from the nucleotide pool, thus preventing their incorporation into DNA/RNA and avoiding chromosomal lesions. The chain is dITP/XTP pyrophosphatase from Tropheryma whipplei (strain Twist) (Whipple's bacillus).